A 122-amino-acid polypeptide reads, in one-letter code: Large ribosomal subunit protein uL14 (122 aa).

This sequence belongs to the universal ribosomal protein uL14 family. As to quaternary structure, part of the 50S ribosomal subunit. Forms a cluster with proteins L3 and L19. In the 70S ribosome, L14 and L19 interact and together make contacts with the 16S rRNA in bridges B5 and B8.

Its function is as follows. Binds to 23S rRNA. Forms part of two intersubunit bridges in the 70S ribosome. The polypeptide is Large ribosomal subunit protein uL14 (Mycoplasma pneumoniae (strain ATCC 29342 / M129 / Subtype 1) (Mycoplasmoides pneumoniae)).